We begin with the raw amino-acid sequence, 987 residues long: UPF0182 protein Lxx09300 (987 aa).

Helical transmembrane passes span Val17–Leu37, Ala59–Ile79, Arg108–Ser128, Val167–Leu187, Val206–Asp226, Ala256–Gly276, and Val283–Ile303. 2 disordered regions span residues Arg700 to Leu719 and Thr886 to Gln947. Positions Thr705–Leu719 are enriched in low complexity. Over residues Gly897 to Ser932 the composition is skewed to gly residues. Residues Ser933 to Gln947 are compositionally biased toward low complexity.

This sequence belongs to the UPF0182 family.

Its subcellular location is the cell membrane. This is UPF0182 protein Lxx09300 from Leifsonia xyli subsp. xyli (strain CTCB07).